A 666-amino-acid chain; its full sequence is SNARE-interacting protein KEULE (666 aa).

Positions 340-377 form a coiled coil; sequence KNKAAQLQGKRDGAELSTRDLQKMVQALPQYSEQIDKL. A disordered region spans residues 534 to 589; it reads KEDFPCMNDPSPSFHGSTSLSSAASSSQGQAAQSMRSRRTPTWAKPRGSDDGYSSD. Over residues 550-568 the composition is skewed to low complexity; sequence STSLSSAASSSQGQAAQSM.

The protein belongs to the STXBP/unc-18/SEC1 family. Binds the syntaxin KNOLLE. Interacts with SEC6. As to expression, expressed throughout the plant, both in mitotically active and quiescent cells. Enriched in dividing tissues.

The protein resides in the cytoplasm. Its subcellular location is the membrane. The protein localises to the cytoskeleton. It is found in the phragmoplast. Its function is as follows. Regulator of vesicle trafficking involved in cytokinesis and root hair development, but not required for cell elongation. The chain is SNARE-interacting protein KEULE (KEU) from Arabidopsis thaliana (Mouse-ear cress).